Here is a 244-residue protein sequence, read N- to C-terminus: 1-(5-phosphoribosyl)-5-[(5-phosphoribosylamino)methylideneamino] imidazole-4-carboxamide isomerase (244 aa).

D10 (proton acceptor) is an active-site residue. D132 acts as the Proton donor in catalysis.

Belongs to the HisA/HisF family.

It is found in the cytoplasm. It catalyses the reaction 1-(5-phospho-beta-D-ribosyl)-5-[(5-phospho-beta-D-ribosylamino)methylideneamino]imidazole-4-carboxamide = 5-[(5-phospho-1-deoxy-D-ribulos-1-ylimino)methylamino]-1-(5-phospho-beta-D-ribosyl)imidazole-4-carboxamide. It functions in the pathway amino-acid biosynthesis; L-histidine biosynthesis; L-histidine from 5-phospho-alpha-D-ribose 1-diphosphate: step 4/9. This Xanthomonas axonopodis pv. citri (strain 306) protein is 1-(5-phosphoribosyl)-5-[(5-phosphoribosylamino)methylideneamino] imidazole-4-carboxamide isomerase.